We begin with the raw amino-acid sequence, 237 residues long: Probable transcriptional regulatory protein MCAP_0598 (237 aa).

This sequence belongs to the TACO1 family.

It localises to the cytoplasm. The chain is Probable transcriptional regulatory protein MCAP_0598 from Mycoplasma capricolum subsp. capricolum (strain California kid / ATCC 27343 / NCTC 10154).